The chain runs to 565 residues: NAD-dependent malic enzyme (565 aa).

Tyr104 serves as the catalytic Proton donor. An NAD(+)-binding site is contributed by Arg157. The active-site Proton acceptor is Lys175. Residues Glu246, Asp247, and Asp270 each contribute to the a divalent metal cation site. NAD(+) is bound by residues Asp270 and Asn418.

Belongs to the malic enzymes family. As to quaternary structure, homotetramer. Mg(2+) serves as cofactor. Requires Mn(2+) as cofactor.

The enzyme catalyses (S)-malate + NAD(+) = pyruvate + CO2 + NADH. The catalysed reaction is oxaloacetate + H(+) = pyruvate + CO2. The sequence is that of NAD-dependent malic enzyme from Shigella boydii serotype 18 (strain CDC 3083-94 / BS512).